The following is a 381-amino-acid chain: MKILIDENMPYAQALFSQLGEVILKPGRTLTADDLIDVDALMIRSVTKVNDALLAKANRLKFVGTATAGMDHVDQALLRERGIFFTAAPGCNKVGVAEYVFSVLMVLAQQQGFSVFDKTVGIIGAGQVGSYLAKCLSGIGMKVLLNDPPKQAQGDEREFTELETLLKQADVITLHTPITRGGEWPTHHLIDAAILEQLRSDQILINAARGPVVDNAALKARLQQGDGFTAVLDVFEFEPQVDMELLPLLAFATPHIAGYGLEGKARGTTMIFNSYCEFLGSAHCANPASLLPKAPVPKVYLERAWDEETLRTLTQIIYDVRKDDAQFRREIHQPGAFDLMRKHYWDRREYSAVTLAGGADCHLAPLAKLGFQVEVCDEPTI.

2 residues coordinate substrate: Ser-45 and Thr-67. NAD(+)-binding positions include Gln-127–Val-128, Asp-147, and Thr-176. Arg-209 is an active-site residue. Residue Asp-233 participates in NAD(+) binding. Glu-238 is an active-site residue. His-255 serves as the catalytic Proton donor. Gly-258 serves as a coordination point for NAD(+). Position 259 (Tyr-259) interacts with substrate.

It belongs to the D-isomer specific 2-hydroxyacid dehydrogenase family. PdxB subfamily. In terms of assembly, homodimer.

It localises to the cytoplasm. It catalyses the reaction 4-phospho-D-erythronate + NAD(+) = (R)-3-hydroxy-2-oxo-4-phosphooxybutanoate + NADH + H(+). It functions in the pathway cofactor biosynthesis; pyridoxine 5'-phosphate biosynthesis; pyridoxine 5'-phosphate from D-erythrose 4-phosphate: step 2/5. Catalyzes the oxidation of erythronate-4-phosphate to 3-hydroxy-2-oxo-4-phosphonooxybutanoate. The polypeptide is Erythronate-4-phosphate dehydrogenase (Vibrio cholerae serotype O1 (strain ATCC 39315 / El Tor Inaba N16961)).